A 256-amino-acid chain; its full sequence is Small ribosomal subunit protein eS1 (256 aa).

The segment covering 1–18 (MAVGKNKRLSKGKKGLKK) has biased composition (basic residues). The disordered stretch occupies residues 1–20 (MAVGKNKRLSKGKKGLKKRT). Residue alanine 2 is modified to N-acetylalanine; partial.

It belongs to the eukaryotic ribosomal protein eS1 family. As to quaternary structure, component of the small ribosomal subunit. Mature ribosomes consist of a small (40S) and a large (60S) subunit. The 40S subunit contains about 33 different proteins and 1 molecule of RNA (18S). The 60S subunit contains about 49 different proteins and 3 molecules of RNA (25S, 5.8S and 5S).

Its subcellular location is the cytoplasm. This chain is Small ribosomal subunit protein eS1 (rps1), found in Talaromyces stipitatus (strain ATCC 10500 / CBS 375.48 / QM 6759 / NRRL 1006) (Penicillium stipitatum).